Consider the following 106-residue polypeptide: Iron-sulfur cluster assembly protein CyaY (106 aa).

The protein belongs to the frataxin family.

Functionally, involved in iron-sulfur (Fe-S) cluster assembly. May act as a regulator of Fe-S biogenesis. The polypeptide is Iron-sulfur cluster assembly protein CyaY (Salmonella schwarzengrund (strain CVM19633)).